The following is a 430-amino-acid chain: 3-phosphoshikimate 1-carboxyvinyltransferase (430 aa).

Positions 25, 26, and 30 each coordinate 3-phosphoshikimate. Residue Lys-25 participates in phosphoenolpyruvate binding. Gly-98 and Arg-126 together coordinate phosphoenolpyruvate. 3-phosphoshikimate is bound by residues Ser-169, Ser-170, Gln-171, Ser-198, Glu-313, and His-342. Gln-171 contributes to the phosphoenolpyruvate binding site. Catalysis depends on Glu-313, which acts as the Proton acceptor. 3 residues coordinate phosphoenolpyruvate: Arg-346, Arg-387, and Lys-412.

It belongs to the EPSP synthase family. As to quaternary structure, monomer.

Its subcellular location is the cytoplasm. It catalyses the reaction 3-phosphoshikimate + phosphoenolpyruvate = 5-O-(1-carboxyvinyl)-3-phosphoshikimate + phosphate. It functions in the pathway metabolic intermediate biosynthesis; chorismate biosynthesis; chorismate from D-erythrose 4-phosphate and phosphoenolpyruvate: step 6/7. Its function is as follows. Catalyzes the transfer of the enolpyruvyl moiety of phosphoenolpyruvate (PEP) to the 5-hydroxyl of shikimate-3-phosphate (S3P) to produce enolpyruvyl shikimate-3-phosphate and inorganic phosphate. The polypeptide is 3-phosphoshikimate 1-carboxyvinyltransferase (Mycobacterium leprae (strain TN)).